We begin with the raw amino-acid sequence, 396 residues long: Acetate kinase (396 aa).

Asparagine 7 is a Mg(2+) binding site. Residue lysine 14 participates in ATP binding. Arginine 88 serves as a coordination point for substrate. The active-site Proton donor/acceptor is the aspartate 145. ATP is bound by residues 203-207 (HAGNG), 278-280 (DAR), and 326-330 (GIGEN). Glutamate 379 is a binding site for Mg(2+).

This sequence belongs to the acetokinase family. As to quaternary structure, homodimer. Mg(2+) is required as a cofactor. It depends on Mn(2+) as a cofactor.

It is found in the cytoplasm. The enzyme catalyses acetate + ATP = acetyl phosphate + ADP. Its pathway is metabolic intermediate biosynthesis; acetyl-CoA biosynthesis; acetyl-CoA from acetate: step 1/2. Catalyzes the formation of acetyl phosphate from acetate and ATP. Can also catalyze the reverse reaction. The chain is Acetate kinase from Phytoplasma australiense.